Here is a 294-residue protein sequence, read N- to C-terminus: ATP synthase gamma chain (294 aa).

Belongs to the ATPase gamma chain family. In terms of assembly, F-type ATPases have 2 components, CF(1) - the catalytic core - and CF(0) - the membrane proton channel. CF(1) has five subunits: alpha(3), beta(3), gamma(1), delta(1), epsilon(1). CF(0) has three main subunits: a, b and c.

It localises to the cell inner membrane. Functionally, produces ATP from ADP in the presence of a proton gradient across the membrane. The gamma chain is believed to be important in regulating ATPase activity and the flow of protons through the CF(0) complex. This is ATP synthase gamma chain from Rhizobium leguminosarum bv. trifolii (strain WSM2304).